A 103-amino-acid chain; its full sequence is Large ribosomal subunit protein uL23 (103 aa).

It belongs to the universal ribosomal protein uL23 family. As to quaternary structure, part of the 50S ribosomal subunit. Contacts protein L29, and trigger factor when it is bound to the ribosome.

Its function is as follows. One of the early assembly proteins it binds 23S rRNA. One of the proteins that surrounds the polypeptide exit tunnel on the outside of the ribosome. Forms the main docking site for trigger factor binding to the ribosome. In Zymomonas mobilis subsp. mobilis (strain ATCC 31821 / ZM4 / CP4), this protein is Large ribosomal subunit protein uL23.